The chain runs to 1090 residues: Aminopeptidase-like protein AC3.5 (1090 aa).

Topologically, residues 1–77 (MEDVDLGKDR…KPKKRIACSP (77 aa)) are cytoplasmic. Residues 21 to 33 (GNGSASNLNNRNN) are compositionally biased toward low complexity. Positions 21-71 (GNGSASNLNNRNNIPLSEKAAKEPLQTQPQEAPPAPKPKVQKQKPPVKPKK) are disordered. Residues 59-71 (KVQKQKPPVKPKK) show a composition bias toward basic residues. The helical; Signal-anchor for type II membrane protein transmembrane segment at 78–98 (GSAICLFLLAVAAIIFAAFLG) threads the bilayer. The Lumenal portion of the chain corresponds to 99-1090 (HYLTKQNYEM…DEMESSEEQE (992 aa)). N115, N123, N143, N176, and N230 each carry an N-linked (GlcNAc...) asparagine glycan. A disordered region spans residues 217 to 259 (VTKRAKKSVDSGTNSTSEMPEGSGEEAMATTATTTTTESTTPV). Residues 241-257 (EEAMATTATTTTTESTT) are compositionally biased toward low complexity. Residues N402, N710, N723, N789, N894, N919, N964, and N993 are each glycosylated (N-linked (GlcNAc...) asparagine). Basic and acidic residues predominate over residues 1069 to 1080 (YLDGKMKGPAKD). The segment at 1069 to 1090 (YLDGKMKGPAKDDEMESSEEQE) is disordered. The segment covering 1081 to 1090 (DEMESSEEQE) has biased composition (acidic residues).

It belongs to the peptidase M1 family.

Its subcellular location is the membrane. The polypeptide is Aminopeptidase-like protein AC3.5 (Caenorhabditis elegans).